Reading from the N-terminus, the 693-residue chain is Bacterial dynamin-like protein (693 aa).

Residues 1 to 521 (MVNQVATDRF…DNSPGWAKWA (521 aa)) are Cytoplasmic-facing. Residues 66–313 (QQGVFRLLVL…QADLDGTGFP (248 aa)) enclose the Dynamin-type G domain. A G1 motif region spans residues 76–83 (GDMKRGKS). GTP is bound at residue 79-84 (KRGKST). Residues 102 to 103 (CT) form a G2 motif region. The segment at 180 to 183 (DSPG) is G3 motif. 235–241 (FLVNAWD) lines the GTP pocket. The segment at 238–241 (NAWD) is G4 motif. N268 is a region of interest (G5 motif). Residue 292 to 293 (SI) participates in GTP binding. The interval 311–571 (GFPKFMDSLN…TAVTGILLGP (261 aa)) is middle domain. Residues 347-378 (REAVARRIPLLEQDVNELKKRIDSVEPEFNKL) adopt a coiled-coil conformation. The stretch at 522 to 574 (MGLLSLSKGNLAGFALAGAGFDWKNILLNYFTVIGIGGIITAVTGILLGPIGF) is an intramembrane region. The interval 572-606 (IGFALLGLGVGFLQADQARRELVKTAKKELVKHLP) is paddle domain. The Cytoplasmic segment spans residues 575–693 (ALLGLGVGFL…AYSNLLAYYS (119 aa)). The interval 607–693 (QVAHEQSQVV…AYSNLLAYYS (87 aa)) is GED. Residues 661-688 (ESEFNRLKNLQEDVIAQLQKIEAAYSNL) adopt a coiled-coil conformation.

This sequence belongs to the TRAFAC class dynamin-like GTPase superfamily. Dynamin/Fzo/YdjA family. Mitofusin subfamily. In terms of assembly, homodimer. Self-assembles in the presence of GMP-PNP and liposomes, and probably also in the presence of GTP.

The protein resides in the cell inner membrane. The catalysed reaction is GTP + H2O = GDP + phosphate + H(+). In terms of biological role, dynamin-related GTPase probably involved in membrane remodeling. Lipid and nucleotide-binding are thought to induce a large intramolecular rearrangement, leading to assembly on lipid bilayers and possible membrane curving. In the presence of the non-hydrolyzable GTP analog GMP-PNP self-assembles on a lipid bilayer; this does not stimulate subsequent GTPase activity. Does not bind lipids in the presence of GDP; perhaps GTP hydrolysis disrupts membrane-binding. This is Bacterial dynamin-like protein from Nostoc punctiforme (strain ATCC 29133 / PCC 73102).